The sequence spans 277 residues: Large ribosomal subunit protein uL2 (277 aa).

2 disordered regions span residues 38–58 and 219–277; these read HRKG…GGGH and TVRG…RKNK.

This sequence belongs to the universal ribosomal protein uL2 family. Part of the 50S ribosomal subunit. Forms a bridge to the 30S subunit in the 70S ribosome.

Its function is as follows. One of the primary rRNA binding proteins. Required for association of the 30S and 50S subunits to form the 70S ribosome, for tRNA binding and peptide bond formation. It has been suggested to have peptidyltransferase activity; this is somewhat controversial. Makes several contacts with the 16S rRNA in the 70S ribosome. This chain is Large ribosomal subunit protein uL2, found in Bacillus pumilus (strain SAFR-032).